We begin with the raw amino-acid sequence, 136 residues long: Large ribosomal subunit protein uL16 (136 aa).

This sequence belongs to the universal ribosomal protein uL16 family. Part of the 50S ribosomal subunit.

Functionally, binds 23S rRNA and is also seen to make contacts with the A and possibly P site tRNAs. The protein is Large ribosomal subunit protein uL16 of Rickettsia peacockii (strain Rustic).